The chain runs to 425 residues: SrfA-induced gene G protein (425 aa).

3 N-linked (GlcNAc...) asparagine glycosylation sites follow: N25, N28, and N36. 3 coiled-coil regions span residues 41-91 (RDSE…RIRN), 172-208 (HEKQ…MKRT), and 292-340 (KFGQ…NYNI). Residues 91 to 113 (NVFKVLITILVGSIIYGTYTNQF) traverse the membrane as a helical segment. The interval 393–413 (KKPHADSNGHPKPYPHHHLLN) is disordered.

The protein localises to the membrane. The polypeptide is SrfA-induced gene G protein (sigG) (Dictyostelium discoideum (Social amoeba)).